A 1102-amino-acid polypeptide reads, in one-letter code: DNA-directed RNA polymerase subunit beta (1102 aa).

The segment at 1076-1102 is disordered; sequence IDSQRRAPNRPTYESLHTEEDLEEEEV.

The protein belongs to the RNA polymerase beta chain family. As to quaternary structure, in cyanobacteria the RNAP catalytic core is composed of 2 alpha, 1 beta, 1 beta', 1 gamma and 1 omega subunit. When a sigma factor is associated with the core the holoenzyme is formed, which can initiate transcription.

The enzyme catalyses RNA(n) + a ribonucleoside 5'-triphosphate = RNA(n+1) + diphosphate. Functionally, DNA-dependent RNA polymerase catalyzes the transcription of DNA into RNA using the four ribonucleoside triphosphates as substrates. This is DNA-directed RNA polymerase subunit beta from Synechocystis sp. (strain ATCC 27184 / PCC 6803 / Kazusa).